Consider the following 85-residue polypeptide: UPF0386 protein Plav_1374 (85 aa).

It belongs to the UPF0386 family.

In Parvibaculum lavamentivorans (strain DS-1 / DSM 13023 / NCIMB 13966), this protein is UPF0386 protein Plav_1374.